Consider the following 205-residue polypeptide: Small ribosomal subunit protein uS4 (205 aa).

Positions N18–S46 are disordered. Positions R94–L154 constitute an S4 RNA-binding domain.

It belongs to the universal ribosomal protein uS4 family. As to quaternary structure, part of the 30S ribosomal subunit. Contacts protein S5. The interaction surface between S4 and S5 is involved in control of translational fidelity.

Its function is as follows. One of the primary rRNA binding proteins, it binds directly to 16S rRNA where it nucleates assembly of the body of the 30S subunit. With S5 and S12 plays an important role in translational accuracy. This chain is Small ribosomal subunit protein uS4, found in Bradyrhizobium sp. (strain ORS 278).